A 1680-amino-acid polypeptide reads, in one-letter code: Alpha-protein kinase 3 (1680 aa).

Residues Met1 to Arg37 form a disordered region. A compositionally biased stretch (gly residues) spans Arg9–Gly21. Residues Pro77 to Thr173 enclose the Ig-like 1 domain. Phosphoserine is present on Ser229. Disordered regions lie at residues Ser237 to Asp288, Glu302 to Glu759, Ser785 to Ser950, Glu1078 to Leu1128, and Pro1147 to Ala1244. Basic and acidic residues predominate over residues Lys320 to Glu337. Positions Ser339–Pro353 are enriched in polar residues. The span at Ala402–Val426 shows a compositional bias: pro residues. A compositionally biased stretch (low complexity) spans Glu514–Leu532. Polar residues-rich tracts occupy residues Ser557 to Lys566 and Glu731 to Ser744. Residues Ser785–Gly796 show a composition bias toward basic and acidic residues. Over residues Ser917–Glu932 the composition is skewed to polar residues. Basic and acidic residues-rich tracts occupy residues Glu1087–Thr1111 and Ala1151–Ser1165. The residue at position 1199 (Ser1199) is a Phosphoserine. Positions Asp1231 to Ala1244 are enriched in basic and acidic residues. The Ig-like 2 domain maps to Pro1251–Ser1339. Cys1273 and Cys1323 form a disulfide bridge. The Alpha-type protein kinase domain occupies Lys1367–Leu1600. Positions Pro1603–Arg1680 are disordered. Composition is skewed to polar residues over residues Pro1639–Thr1660 and Asp1671–Arg1680.

Belongs to the protein kinase superfamily. Alpha-type protein kinase family. ALPK subfamily. As to expression, expressed in the heart and skeletal muscle of adult mice.

The protein resides in the nucleus. The enzyme catalyses L-seryl-[protein] + ATP = O-phospho-L-seryl-[protein] + ADP + H(+). It carries out the reaction L-threonyl-[protein] + ATP = O-phospho-L-threonyl-[protein] + ADP + H(+). In terms of biological role, involved in cardiomyocyte differentiation. The polypeptide is Alpha-protein kinase 3 (Mus musculus (Mouse)).